Here is a 326-residue protein sequence, read N- to C-terminus: Pyruvate dehydrogenase E1 component subunit alpha (326 aa).

As to quaternary structure, heterodimer of an alpha and a beta chain. The cofactor is thiamine diphosphate.

The catalysed reaction is N(6)-[(R)-lipoyl]-L-lysyl-[protein] + pyruvate + H(+) = N(6)-[(R)-S(8)-acetyldihydrolipoyl]-L-lysyl-[protein] + CO2. The pyruvate dehydrogenase complex catalyzes the overall conversion of pyruvate to acetyl-CoA and CO(2). It contains multiple copies of three enzymatic components: pyruvate dehydrogenase (E1), dihydrolipoamide acetyltransferase (E2) and lipoamide dehydrogenase (E3). The polypeptide is Pyruvate dehydrogenase E1 component subunit alpha (pdhA) (Rickettsia conorii (strain ATCC VR-613 / Malish 7)).